A 392-amino-acid polypeptide reads, in one-letter code: CD2 homolog (392 aa).

The first 16 residues, M1–S16, serve as a signal peptide directing secretion. Residues I17–Y222 lie on the Extracellular side of the membrane. N39, N88, N92, N106, N148, N159, N183, N191, N198, and N204 each carry an N-linked (GlcNAc...) asparagine; by host glycan. Cystine bridges form between C137–C205 and C144–C188. A helical membrane pass occupies residues I223–I243. Residues T244–I392 lie on the Cytoplasmic side of the membrane. The interval E258–K290 is disordered. A compositionally biased stretch (basic and acidic residues) spans Q269–P283. A run of 5 repeats spans residues K319–P324, K325–P330, K331–P336, K337–S342, and K343–P348. Positions K319–P348 are 5 X 6 AA tandem repeats of K-P-C-[PRS]-[P]-[PS]. The interval P328 to C357 is disordered.

The protein belongs to the asfivirus CD2 homolog protein family. In terms of assembly, both glycosylated and nonglycosylated forms interact (via C-terminus) with the host AP-1 complex. Cleaved into two fragments of 63 kDa and 26 kDa containing respectively the glycosylated N-terminus and the nonglycosylated C-terminus. A full-length 89-kDa glycosylated form also exists.

The protein localises to the host cell membrane. It localises to the virion membrane. It is found in the host Golgi apparatus. In terms of biological role, may play an immunosuppressive role by inhibiting lymphocyte proliferation and subsequently facilitating viral replication and generalization of infection. Responsible for viral hemadsorption, which may help viral spread. Increases virus replication in the tick vector at the step of virus uptake or replication in the tick gut. May play a role in the host Golgi reorganization to yield viral factories. May play a role in host cell penetration. This Ornithodoros (relapsing fever ticks) protein is CD2 homolog.